A 283-amino-acid polypeptide reads, in one-letter code: MGIKDFRPLTPVQRFTSLDDFSDITKTEPEWDLTEPYKKKGGRNNYGRITARHRGGGHKQRYRIIDFKRDKTGIFATVEAIEYDPLRTARIALLRYDDQEKRYIIAPQELKVGSRVVSGPDAPPEVGNSLPLKNIPSGLPIYNIELVPGKGGQLVRSAGSSARMMGLDKEYAIVKLPSGEIRKVCAECYATVGQVSNPDHFNKSLGKAGRTRWLGWRPRVRGVAMNPVDHPNGGGQGKSKGGGGWQQLESPWGKPAKGKKTRHKRKNSTKFIIERRPKKKKKK.

Disordered stretches follow at residues 34–53 and 224–283; these read TEPYKKKGGRNNYGRITARH and AMNP…KKKK. Residues 232–245 show a composition bias toward gly residues; sequence NGGGQGKSKGGGGW. Basic residues predominate over residues 256–268; the sequence is AKGKKTRHKRKNS.

This sequence belongs to the universal ribosomal protein uL2 family. Part of the 50S ribosomal subunit. Forms a bridge to the 30S subunit in the 70S ribosome.

Its function is as follows. One of the primary rRNA binding proteins. Required for association of the 30S and 50S subunits to form the 70S ribosome, for tRNA binding and peptide bond formation. It has been suggested to have peptidyltransferase activity; this is somewhat controversial. Makes several contacts with the 16S rRNA in the 70S ribosome. The sequence is that of Large ribosomal subunit protein uL2 from Methylacidiphilum infernorum (isolate V4) (Methylokorus infernorum (strain V4)).